The chain runs to 1020 residues: Inner tegument protein (1020 aa).

The interval 539–1020 (WGVRIPDRDT…EIDAIFNNTK (482 aa)) is interaction with large tegument protein.

This sequence belongs to the herpesviridae inner tegument protein family. As to quaternary structure, interacts (via C-terminus) with the large tegument protein/LTP (via N-terminus).

Its subcellular location is the virion tegument. It is found in the host cytoplasm. It localises to the host nucleus. The protein resides in the host Golgi apparatus. The protein localises to the host trans-Golgi network. In terms of biological role, plays an essential role in cytoplasmic secondary envelopment during viral egress. Interacts with the capsid via the large tegument protein/LTP and participates in its transport to the host trans-Golgi network (TGN) where secondary envelopment occurs. Modulates tegumentation and capsid accumulation at the viral assembly complex. This is Inner tegument protein from Equine herpesvirus 1 (strain Ab4p) (EHV-1).